Consider the following 183-residue polypeptide: Archaemetzincin (183 aa).

H131 lines the Zn(2+) pocket. E132 serves as the catalytic Proton acceptor. Positions 135, 141, 142, 147, and 166 each coordinate Zn(2+).

Belongs to the peptidase M54 family. As to quaternary structure, monomer. Zn(2+) is required as a cofactor.

Its function is as follows. Probable zinc metalloprotease whose natural substrate is unknown. The sequence is that of Archaemetzincin from Saccharolobus solfataricus (strain ATCC 35092 / DSM 1617 / JCM 11322 / P2) (Sulfolobus solfataricus).